Reading from the N-terminus, the 294-residue chain is Protease HtpX homolog (294 aa).

2 helical membrane-spanning segments follow: residues 12–32 and 34–54; these read VLFG…ASSF and SPGV…YSYW. Position 138 (H138) interacts with Zn(2+). The active site involves E139. A Zn(2+)-binding site is contributed by H142. 2 helical membrane-spanning segments follow: residues 152 to 172 and 188 to 208; these read SVAG…VFFG and LALL…QLAI. E213 provides a ligand contact to Zn(2+).

This sequence belongs to the peptidase M48B family. Zn(2+) is required as a cofactor.

It is found in the cell membrane. The protein is Protease HtpX homolog of Kineococcus radiotolerans (strain ATCC BAA-149 / DSM 14245 / SRS30216).